We begin with the raw amino-acid sequence, 219 residues long: Germin-like protein subfamily 2 member 3 (219 aa).

Residues 1–22 form the signal peptide; that stretch reads MATSMIPIFVTFMLVAAHMALA. An intrachain disulfide couples Cys-31 to Cys-46. The Cupin type-1 domain occupies 60 to 209; sequence IGLATAAATA…AFGAAAPEIQ (150 aa). Asn-70 carries N-linked (GlcNAc...) asparagine glycosylation. Positions 109, 111, 116, and 155 each coordinate Mn(2+).

This sequence belongs to the germin family. As to quaternary structure, oligomer (believed to be a pentamer but probably hexamer).

Its subcellular location is the secreted. The protein localises to the extracellular space. The protein resides in the apoplast. May play a role in plant defense. Probably has no oxalate oxidase activity even if the active site is conserved. This chain is Germin-like protein subfamily 2 member 3 (GLP8), found in Arabidopsis thaliana (Mouse-ear cress).